Reading from the N-terminus, the 492-residue chain is Endoglucanase 15 (492 aa).

A signal peptide spans 1–30 (MSCISSQCFITIKSICIVLLLSITCGAVSA). Asp86 (nucleophile) is an active-site residue. Catalysis depends on residues His414, Asp466, and Glu475.

It belongs to the glycosyl hydrolase 9 (cellulase E) family.

The protein localises to the secreted. It carries out the reaction Endohydrolysis of (1-&gt;4)-beta-D-glucosidic linkages in cellulose, lichenin and cereal beta-D-glucans.. The sequence is that of Endoglucanase 15 from Arabidopsis thaliana (Mouse-ear cress).